Consider the following 390-residue polypeptide: MKFVDEATILVVAGDGGNGCVSFRREKYIPKGGPDGGDGGDGGDVWLEADENLNTLIDYRFEKSFRAERGQNGQSRDCTGKRGKDVTIKVPVGTRVIDQGTGETMGDMTKHGQRLMVAKGGWHGLGNTRFKSSVNRTPRQKTMGTPGEKRDLQLELMLLADVGMLGMPNAGKSTFIRAVSAAKPKVADYPFTTLVPSLGVVRMDNEKSFVVADIPGLIEGAAEGAGLGIRFLKHLERCRVLLHLIDLDPIDGSDPAENARIIVGELEKYSEKLASKPRWLVFNKIDLLSREEAEAKAKAIADALGWEEKYYLISAASQMNVKDLCWDVMHFIIENPVVHEEEAKQPEKVEFMWDDYHRQQLEEMEAEAEEEWDDDWDEDDDEGVEIVYQR.

Residues 1 to 159 (MKFVDEATIL…RDLQLELMLL (159 aa)) form the Obg domain. Residues 127-146 (NTRFKSSVNRTPRQKTMGTP) form a disordered region. A compositionally biased stretch (polar residues) spans 129 to 143 (RFKSSVNRTPRQKTM). Residues 160-333 (ADVGMLGMPN…LCWDVMHFII (174 aa)) enclose the OBG-type G domain. GTP is bound by residues 166–173 (GMPNAGKS), 191–195 (FTTLV), 213–216 (DIPG), 283–286 (NKID), and 314–316 (SAA). Positions 173 and 193 each coordinate Mg(2+). Residues 364–384 (MEAEAEEEWDDDWDEDDDEGV) are compositionally biased toward acidic residues. The segment at 364–390 (MEAEAEEEWDDDWDEDDDEGVEIVYQR) is disordered.

It belongs to the TRAFAC class OBG-HflX-like GTPase superfamily. OBG GTPase family. Monomer. Mg(2+) is required as a cofactor.

The protein localises to the cytoplasm. Its function is as follows. An essential GTPase which binds GTP, GDP and possibly (p)ppGpp with moderate affinity, with high nucleotide exchange rates and a fairly low GTP hydrolysis rate. Plays a role in control of the cell cycle, stress response, ribosome biogenesis and in those bacteria that undergo differentiation, in morphogenesis control. This Cronobacter sakazakii (strain ATCC BAA-894) (Enterobacter sakazakii) protein is GTPase Obg.